We begin with the raw amino-acid sequence, 429 residues long: Saccharopine dehydrogenase-like oxidoreductase (429 aa).

At A2 the chain carries N-acetylalanine. Residues S209, S215, and S217 each carry the phosphoserine modification.

Belongs to the saccharopine dehydrogenase family.

The chain is Saccharopine dehydrogenase-like oxidoreductase (Sccpdh) from Mus musculus (Mouse).